Consider the following 62-residue polypeptide: Large ribosomal subunit protein uL29 (62 aa).

It belongs to the universal ribosomal protein uL29 family.

This is Large ribosomal subunit protein uL29 from Geobacter sp. (strain M21).